Reading from the N-terminus, the 337-residue chain is UPF0252 protein PH1321 (337 aa).

The chain crosses the membrane as a helical span at residues 100–120; it reads IIGMLFLVFIILPAITSNLWS.

This sequence belongs to the UPF0252 family.

The protein localises to the membrane. The polypeptide is UPF0252 protein PH1321 (Pyrococcus horikoshii (strain ATCC 700860 / DSM 12428 / JCM 9974 / NBRC 100139 / OT-3)).